Here is a 354-residue protein sequence, read N- to C-terminus: Lipoyl synthase, mitochondrial (354 aa).

Positions 91, 96, 102, 122, 126, 129, and 337 each coordinate [4Fe-4S] cluster. Residues 107–326 (DDSLATATIM…AEYSKKLGFL (220 aa)) enclose the Radical SAM core domain.

Belongs to the radical SAM superfamily. Lipoyl synthase family. [4Fe-4S] cluster is required as a cofactor.

The protein localises to the mitochondrion. It carries out the reaction [[Fe-S] cluster scaffold protein carrying a second [4Fe-4S](2+) cluster] + N(6)-octanoyl-L-lysyl-[protein] + 2 oxidized [2Fe-2S]-[ferredoxin] + 2 S-adenosyl-L-methionine + 4 H(+) = [[Fe-S] cluster scaffold protein] + N(6)-[(R)-dihydrolipoyl]-L-lysyl-[protein] + 4 Fe(3+) + 2 hydrogen sulfide + 2 5'-deoxyadenosine + 2 L-methionine + 2 reduced [2Fe-2S]-[ferredoxin]. The protein operates within protein modification; protein lipoylation via endogenous pathway; protein N(6)-(lipoyl)lysine from octanoyl-[acyl-carrier-protein]: step 2/2. In terms of biological role, catalyzes the radical-mediated insertion of two sulfur atoms into the C-6 and C-8 positions of the octanoyl moiety bound to the lipoyl domains of lipoate-dependent enzymes, thereby converting the octanoylated domains into lipoylated derivatives. The protein is Lipoyl synthase, mitochondrial of Caenorhabditis elegans.